A 503-amino-acid polypeptide reads, in one-letter code: Aspartyl/glutamyl-tRNA(Asn/Gln) amidotransferase subunit B (503 aa).

The protein belongs to the GatB/GatE family. GatB subfamily. Heterotrimer of A, B and C subunits.

It catalyses the reaction L-glutamyl-tRNA(Gln) + L-glutamine + ATP + H2O = L-glutaminyl-tRNA(Gln) + L-glutamate + ADP + phosphate + H(+). The enzyme catalyses L-aspartyl-tRNA(Asn) + L-glutamine + ATP + H2O = L-asparaginyl-tRNA(Asn) + L-glutamate + ADP + phosphate + 2 H(+). Functionally, allows the formation of correctly charged Asn-tRNA(Asn) or Gln-tRNA(Gln) through the transamidation of misacylated Asp-tRNA(Asn) or Glu-tRNA(Gln) in organisms which lack either or both of asparaginyl-tRNA or glutaminyl-tRNA synthetases. The reaction takes place in the presence of glutamine and ATP through an activated phospho-Asp-tRNA(Asn) or phospho-Glu-tRNA(Gln). The sequence is that of Aspartyl/glutamyl-tRNA(Asn/Gln) amidotransferase subunit B from Cereibacter sphaeroides (strain ATCC 17025 / ATH 2.4.3) (Rhodobacter sphaeroides).